The chain runs to 289 residues: 4-diphosphocytidyl-2-C-methyl-D-erythritol kinase (289 aa).

Lys-10 is a catalytic residue. 94 to 104 provides a ligand contact to ATP; sequence PVAAGLAGGSS. Asp-136 is an active-site residue.

It belongs to the GHMP kinase family. IspE subfamily.

It catalyses the reaction 4-CDP-2-C-methyl-D-erythritol + ATP = 4-CDP-2-C-methyl-D-erythritol 2-phosphate + ADP + H(+). Its pathway is isoprenoid biosynthesis; isopentenyl diphosphate biosynthesis via DXP pathway; isopentenyl diphosphate from 1-deoxy-D-xylulose 5-phosphate: step 3/6. Functionally, catalyzes the phosphorylation of the position 2 hydroxy group of 4-diphosphocytidyl-2C-methyl-D-erythritol. The polypeptide is 4-diphosphocytidyl-2-C-methyl-D-erythritol kinase (Bacillus mycoides (strain KBAB4) (Bacillus weihenstephanensis)).